A 266-amino-acid chain; its full sequence is MSIVTPYEDLLRFVLETGTPKSDRTGTGTRSLFGQQMRYDLSAGFPLLTTKKVHFKSVAYELLWFLRGDSNIGWLHEHGVTIWDEWASDTGELGPIYGVQWRSWPAPSGEHIDQISAALDLLRTDPDSRRIIVSAWNVGEIERMALPPCHAFFQFYVADGRLSCQLYQRSADLFLGVPFNIASYALLTHMMAAQAGLSVGEFIWTGGDCHIYDNHVEQVRLQLSREPRPYPKLLLADRDSIFEYTYEDIVVKNYDPHPAIKAPVAV.

A dUMP-binding site is contributed by arginine 24. Histidine 54 provides a ligand contact to (6R)-5,10-methylene-5,6,7,8-tetrahydrofolate. 129–130 serves as a coordination point for dUMP; it reads RR. The Nucleophile role is filled by cysteine 149. DUMP is bound by residues 169–172, asparagine 180, and 210–212; these read RSAD and HIY. A (6R)-5,10-methylene-5,6,7,8-tetrahydrofolate-binding site is contributed by aspartate 172. Residue alanine 265 participates in (6R)-5,10-methylene-5,6,7,8-tetrahydrofolate binding.

Belongs to the thymidylate synthase family. Bacterial-type ThyA subfamily. As to quaternary structure, homodimer.

Its subcellular location is the cytoplasm. The catalysed reaction is dUMP + (6R)-5,10-methylene-5,6,7,8-tetrahydrofolate = 7,8-dihydrofolate + dTMP. The protein operates within pyrimidine metabolism; dTTP biosynthesis. In terms of biological role, catalyzes the reductive methylation of 2'-deoxyuridine-5'-monophosphate (dUMP) to 2'-deoxythymidine-5'-monophosphate (dTMP) while utilizing 5,10-methylenetetrahydrofolate (mTHF) as the methyl donor and reductant in the reaction, yielding dihydrofolate (DHF) as a by-product. This enzymatic reaction provides an intracellular de novo source of dTMP, an essential precursor for DNA biosynthesis. The protein is Thymidylate synthase of Mycobacterium bovis (strain ATCC BAA-935 / AF2122/97).